We begin with the raw amino-acid sequence, 427 residues long: Enolase (427 aa).

Position 162 (Q162) interacts with (2R)-2-phosphoglycerate. Residue E204 is the Proton donor of the active site. Mg(2+) is bound by residues D241, E282, and D309. Residues K334, R363, S364, and K385 each contribute to the (2R)-2-phosphoglycerate site. K334 functions as the Proton acceptor in the catalytic mechanism.

It belongs to the enolase family. It depends on Mg(2+) as a cofactor.

It is found in the cytoplasm. Its subcellular location is the secreted. The protein resides in the cell surface. The catalysed reaction is (2R)-2-phosphoglycerate = phosphoenolpyruvate + H2O. It participates in carbohydrate degradation; glycolysis; pyruvate from D-glyceraldehyde 3-phosphate: step 4/5. In terms of biological role, catalyzes the reversible conversion of 2-phosphoglycerate (2-PG) into phosphoenolpyruvate (PEP). It is essential for the degradation of carbohydrates via glycolysis. The chain is Enolase from Parafrankia sp. (strain EAN1pec).